The chain runs to 559 residues: MTEPLLDSSSDDEPSLVLPENINQPFTTGAEVFGWCLYSWAAEPFIVSVVGTYVPLLLEQIARDNGVKLIDKITPCNQPHDPTIPIPSPPKDGDFPNSTLTYASQNDSCVLPMFGGRFYIDTSSYALYTFSMSVLIQTILVISMSGAADRGSHRKSMLVGFGVTGGLITMCYWLVDDRNYYMASMLAILANSAFGGVNVCGNSFLSLLVNNHPSVRQIHLSKSLKLARMGEISSKISGICAASGYISALLMQIITMLVILHVRNNPNIDSLIYPLKLVIGLVGLWWFVFQLPIQFLLKPRLSKELHVSIEPPDPSKPGYSVNIVRYKMLVVGAYILHGYKTLFSAARAASQLKDIMAFLLGWFIISDSLTTINSTAILFAKSDLQMTTVQLSQIGVLTMISAIAGSVLLPNVIQPYFKLGLKQTMILIIVWASLIPLYGILGFFIRSLGLHHAVEMYVLAIWYGFSLGGVATISRSLYSMLIPPGQESVFFALFSITDKGSSIVGPFLVGLIIDKTHDIRKCFWLLFVFLIAAVPVFWYGIDVDRGINEATVLEHEQDG.

Residues 32–52 form a helical membrane-spanning segment; that stretch reads VFGWCLYSWAAEPFIVSVVGT. Asn97 and Asn106 each carry an N-linked (GlcNAc...) asparagine glycan. 11 consecutive transmembrane segments (helical) span residues 126 to 146, 156 to 176, 181 to 201, 239 to 259, 277 to 297, 358 to 378, 393 to 413, 425 to 445, 453 to 473, 493 to 513, and 523 to 543; these read ALYT…SMSG, SMLV…WLVD, YMAS…NVCG, ICAA…MLVI, LVIG…QFLL, FLLG…TAIL, QIGV…PNVI, MILI…GFFI, AVEM…VATI, LFSI…GLII, and FWLL…GIDV.

The protein belongs to the ATG22 family.

The protein localises to the vacuole membrane. In terms of biological role, vacuolar effluxer which mediate the efflux of amino acids resulting from autophagic degradation. The release of autophagic amino acids allows the maintenance of protein synthesis and viability during nitrogen starvation. This Pichia angusta (Yeast) protein is Autophagy-related protein 22 (ATG22).